The chain runs to 644 residues: Ribonuclease R (644 aa).

An RNB domain is found at 211-529 (RINYSHIPFI…LHRLLKELLF (319 aa)). The 72-residue stretch at 573 to 644 (LEFLEKEFLG…ITERIKEHVS (72 aa)) folds into the S1 motif domain.

This sequence belongs to the RNR ribonuclease family. RNase R subfamily.

The protein resides in the cytoplasm. It catalyses the reaction Exonucleolytic cleavage in the 3'- to 5'-direction to yield nucleoside 5'-phosphates.. In terms of biological role, 3'-5' exoribonuclease that releases 5'-nucleoside monophosphates and is involved in maturation of structured RNAs. This chain is Ribonuclease R, found in Helicobacter pylori (strain J99 / ATCC 700824) (Campylobacter pylori J99).